The following is a 461-amino-acid chain: Thyroid hormone receptor beta (461 aa).

The disordered stretch occupies residues 1 to 24 (MTPNSMTENRLPAWDKQKPHPDRG). Positions 1-106 (MTPNSMTENR…IPSYLDKDEL (106 aa)) are modulating. The span at 13 to 24 (AWDKQKPHPDRG) shows a compositional bias: basic and acidic residues. Positions 107, 110, 124, 127, 145, 151, 161, and 164 each coordinate Zn(2+). NR C4-type zinc fingers lie at residues 107–127 (CVVCGDKATGYHYRCITCEGC) and 145–169 (CKYEGKCIIDKVTRNQCQECRFKKC). A DNA-binding region (nuclear receptor) is located at residues 107 to 181 (CVVCGDKATG…VGMATDLVLD (75 aa)). In terms of domain architecture, NR LBD spans 217 to 461 (EEWELIKTVT…PPLFLEVFED (245 aa)). The interval 244 to 461 (KFLPEDIGQA…PPLFLEVFED (218 aa)) is interaction with NR2F6. Positions 282, 331, and 435 each coordinate 3,3',5-triiodo-L-thyronine. L-thyroxine contacts are provided by arginine 282, asparagine 331, and histidine 435.

Belongs to the nuclear hormone receptor family. NR1 subfamily. Binds DNA as a dimer; homodimer and heterodimer with RXRA. Interacts with the coactivators NCOA1/SRC1, NCOA2/GRIP1, NCOA7 and MED1/TRAP220 in a ligand-inducible manner. Interacts with the corepressor NCOR1 in absence of ligand. Interacts with C1D. Interacts with NR2F6; the interaction impairs the binding of the THRB homodimer and THRB:RXRB heterodimer to T3 response elements. Interacts with PRMT2 and THRSP. Interacts with TACC1; this interaction is decreased in the presence of thyroid hormone T3.

Its subcellular location is the nucleus. Functionally, nuclear hormone receptor that can act as a repressor or activator of transcription. High affinity receptor for thyroid hormones, including triiodothyronine and thyroxine. This chain is Thyroid hormone receptor beta (Thrb), found in Rattus norvegicus (Rat).